Here is a 364-residue protein sequence, read N- to C-terminus: S-adenosylmethionine:tRNA ribosyltransferase-isomerase (364 aa).

This sequence belongs to the QueA family. In terms of assembly, monomer.

It is found in the cytoplasm. The enzyme catalyses 7-aminomethyl-7-carbaguanosine(34) in tRNA + S-adenosyl-L-methionine = epoxyqueuosine(34) in tRNA + adenine + L-methionine + 2 H(+). The protein operates within tRNA modification; tRNA-queuosine biosynthesis. Functionally, transfers and isomerizes the ribose moiety from AdoMet to the 7-aminomethyl group of 7-deazaguanine (preQ1-tRNA) to give epoxyqueuosine (oQ-tRNA). This chain is S-adenosylmethionine:tRNA ribosyltransferase-isomerase, found in Synechococcus sp. (strain CC9902).